Here is a 666-residue protein sequence, read N- to C-terminus: Probable potassium transport system protein Kup (666 aa).

The next 12 membrane-spanning stretches (helical) occupy residues 16 to 36, 58 to 78, 100 to 120, 149 to 169, 173 to 193, 221 to 241, 253 to 273, 294 to 314, 343 to 363, 373 to 393, 399 to 419, and 424 to 444; these read GFIIALGIVYGDIGTSPLYTM, ISLIIWTLTLITTIKYVLIAL, PWLIVPAMIGGATLLSDGALT, IITTLVILIVLFGIQRFGTGF, IFGPVMFIWFSFLGVSGFFNM, IFILGSIFLATTGAEALYSDL, WPFVKMCIVLSYCGQAAWILA, VYLVSLATLAAIIASQALISG, LYIPVINWILFAVTSCTVLAF, YGLAITITMLMTTILLKYYLI, PILAHLVMAFFALVEFIFFLA, and FMHGGYAVVILALAIVFVMFI.

It belongs to the HAK/KUP transporter (TC 2.A.72) family.

It is found in the cell membrane. It catalyses the reaction K(+)(in) + H(+)(in) = K(+)(out) + H(+)(out). Its function is as follows. Transport of potassium into the cell. Likely operates as a K(+):H(+) symporter. In Streptococcus pyogenes serotype M3 (strain ATCC BAA-595 / MGAS315), this protein is Probable potassium transport system protein Kup.